A 241-amino-acid polypeptide reads, in one-letter code: Class B acid phosphatase (241 aa).

The first 27 residues, 1 to 27 (MFITTKKSLIALVLATAGLISSPVSFA), serve as a signal peptide directing secretion. Catalysis depends on Asp-72, which acts as the Nucleophile. The Mg(2+) site is built by Asp-72 and Asp-74. Asp-74 functions as the Proton donor in the catalytic mechanism. Substrate contacts are provided by residues 141-142 (TG) and Lys-181. Residue Asp-196 coordinates Mg(2+).

Belongs to the class B bacterial acid phosphatase family. In terms of assembly, homotetramer. Mg(2+) is required as a cofactor.

The protein localises to the periplasm. It catalyses the reaction a phosphate monoester + H2O = an alcohol + phosphate. Dephosphorylates several organic phosphate monoesters. Also has a phosphotransferase activity catalyzing the transfer of low-energy phosphate groups from organic phosphate monoesters to free hydroxyl groups of various organic compounds. The chain is Class B acid phosphatase from Edwardsiella ictaluri (strain 93-146).